The sequence spans 647 residues: Cartilage acidic protein 1 (647 aa).

The first 30 residues, 1–30 (MMLPADFFVPVSKMMLLALLLSIIICCGGA), serve as a signal peptide directing secretion. The FG-GAP 1; atypical repeat unit spans residues 48–90 (DYDSNPTQLNYGVAITDVDNDGDFEVVVAGYNGPNLVLKYIKE). Residues 107–149 (YALRDRQGNAIGVAACDIDGDGREEIYFLNTNNAFSGIATYSD) form an FG-GAP 2; atypical repeat. The FG-GAP 3; atypical repeat unit spans residues 285-335 (TGVDDVYQHGRGVALADFNRDGKVDIVYGNWNGPHRLFLQMNTNGKVRFRD). One copy of the FG-GAP 4; atypical repeat lies at 397 to 439 (GDASEPDGRGTGGAVTDFDGDGMLDLILSHGESMAQPLSVFKG). The EGF-like domain maps to 561–607 (DTDECIQFPFVCPREKPVCINTYGGYKCRPNRRCSRGFEPNEDGTAC). Disulfide bonds link cysteine 565-cysteine 579, cysteine 572-cysteine 588, and cysteine 594-cysteine 607.

It is found in the secreted. The protein localises to the extracellular space. It localises to the extracellular matrix. This Xenopus tropicalis (Western clawed frog) protein is Cartilage acidic protein 1 (crtac1).